A 358-amino-acid chain; its full sequence is N-acylethanolamine-hydrolyzing acid amidase (358 aa).

A signal peptide spans 1–26 (MQGTGHPVRPVLELLLLLLLLAGVGG). Asn39 and Asn108 each carry an N-linked (GlcNAc...) asparagine glycan. Cys127 serves as the catalytic Nucleophile. Residues Asn310, Asn334, and Asn356 are each glycosylated (N-linked (GlcNAc...) asparagine).

Belongs to the acid ceramidase family. As to quaternary structure, heterodimer of an alpha and a beta subunit, produced by autocatalytic cleavage. N-glycosylated. Tunicamycin treatment causes a reduction in specific activity against N-palmitoylethanolamine. Post-translationally, autoproteolytic cleavage at pH 4.5 gives rise to the alpha and beta subunit. Cleavage gives rise to a conformation change that activates the enzyme. The same catalytic Cys residue mediates the autoproteolytic cleavage and subsequent hydrolysis of lipid substrates.

It is found in the lysosome. Its subcellular location is the membrane. The enzyme catalyses N-hexadecanoylethanolamine + H2O = ethanolamine + hexadecanoate. It carries out the reaction an N-(long-chain fatty acyl)ethanolamine + H2O = a long-chain fatty acid + ethanolamine. It catalyses the reaction N-dodecanoylethanolamine + H2O = dodecanoate + ethanolamine. The catalysed reaction is N-tetradecanoylethanolamine + H2O = tetradecanoate + ethanolamine. The enzyme catalyses an N-acylsphing-4-enine + H2O = sphing-4-enine + a fatty acid. It carries out the reaction N-hexadecanoylsphing-4-enine + H2O = sphing-4-enine + hexadecanoate. It catalyses the reaction N-dodecanoylsphing-4-enine + H2O = dodecanoate + sphing-4-enine. Its pathway is lipid metabolism; fatty acid metabolism. Functionally, degrades bioactive fatty acid amides to their corresponding acids, with the following preference: N-palmitoylethanolamine &gt; N-myristoylethanolamine &gt; N-stearoylethanolamine &gt; N-oleoylethanolamine &gt; N-linoleoylethanolamine &gt; N-arachidonoylethanolamine. The polypeptide is N-acylethanolamine-hydrolyzing acid amidase (Oryctolagus cuniculus (Rabbit)).